The sequence spans 158 residues: Cyclic pyranopterin monophosphate synthase (158 aa).

Residues 75–77 (LCH) and 113–114 (ME) each bind substrate. Residue Asp-128 is part of the active site.

The protein belongs to the MoaC family. As to quaternary structure, homohexamer; trimer of dimers.

The enzyme catalyses (8S)-3',8-cyclo-7,8-dihydroguanosine 5'-triphosphate = cyclic pyranopterin phosphate + diphosphate. It functions in the pathway cofactor biosynthesis; molybdopterin biosynthesis. Catalyzes the conversion of (8S)-3',8-cyclo-7,8-dihydroguanosine 5'-triphosphate to cyclic pyranopterin monophosphate (cPMP). This chain is Cyclic pyranopterin monophosphate synthase, found in Pasteurella multocida (strain Pm70).